Here is a 403-residue protein sequence, read N- to C-terminus: Phosphomevalonate dehydratase large subunit (403 aa).

Positions 48, 49, 50, 79, and 80 each coordinate (R)-5-phosphomevalonate. C119 is a binding site for [4Fe-4S] cluster. (R)-5-phosphomevalonate-binding residues include E138 and S139. Positions 301 and 358 each coordinate [4Fe-4S] cluster. K378 is a (R)-5-phosphomevalonate binding site.

The protein belongs to the AcnX type II large subunit family. Heterodimer composed of a large subunit (PMDh-L) and a small subunit (PMDh-S). [4Fe-4S] cluster is required as a cofactor.

The catalysed reaction is (R)-5-phosphomevalonate = (2E)-3-methyl-5-phosphooxypent-2-enoate + H2O. The protein operates within isoprenoid biosynthesis; isopentenyl diphosphate biosynthesis via mevalonate pathway. Its function is as follows. Component of a hydro-lyase that catalyzes the dehydration of mevalonate 5-phosphate (MVA5P) to form trans-anhydromevalonate 5-phosphate (tAHMP). Involved in the archaeal mevalonate (MVA) pathway, which provides fundamental precursors for isoprenoid biosynthesis, such as isopentenyl diphosphate (IPP) and dimethylallyl diphosphate (DMAPP). This Methanocaldococcus jannaschii (strain ATCC 43067 / DSM 2661 / JAL-1 / JCM 10045 / NBRC 100440) (Methanococcus jannaschii) protein is Phosphomevalonate dehydratase large subunit.